Here is a 742-residue protein sequence, read N- to C-terminus: Eukaryotic translation initiation factor 3 subunit B (742 aa).

Over residues 1-10 (MAPSFDTLSE) the composition is skewed to polar residues. The tract at residues 1–20 (MAPSFDTLSEQDLHEEEEEE) is disordered. The region spanning 40–126 (TFVVIDGLPI…HTLAVNKLMD (87 aa)) is the RRM domain. 5 WD repeats span residues 193–230 (AHWT…KLKQ), 232–290 (PHPF…RSFV), 304–345 (QPKK…LLGK), 515–558 (IEKK…EKPE), and 573–611 (VEHY…HTFA).

Belongs to the eIF-3 subunit B family. Component of the eukaryotic translation initiation factor 3 (eIF-3) complex.

The protein resides in the cytoplasm. Its function is as follows. RNA-binding component of the eukaryotic translation initiation factor 3 (eIF-3) complex, which is involved in protein synthesis of a specialized repertoire of mRNAs and, together with other initiation factors, stimulates binding of mRNA and methionyl-tRNAi to the 40S ribosome. The eIF-3 complex specifically targets and initiates translation of a subset of mRNAs involved in cell proliferation. The sequence is that of Eukaryotic translation initiation factor 3 subunit B (prt1) from Aspergillus terreus (strain NIH 2624 / FGSC A1156).